Consider the following 1133-residue polypeptide: Envelopment polyprotein (1133 aa).

The N-terminal stretch at 1–17 is a signal peptide; the sequence is MWSLLLLAALVGQGFAL. The Lumenal segment spans residues 18–484; that stretch reads KNVFDMRIQC…PGFHGWATAA (467 aa). Cystine bridges form between C27/C149, C61/C155, C107/C126, C131/C136, C173/C183, C208/C245, C232/C349, C374/C433, C378/C387, C403/C422, and C450/C473. A glycan (N-linked (GlcNAc...) asparagine; by host) is linked at N132. N233 and N345 each carry an N-linked (GlcNAc...) asparagine; by host glycan. N-linked (GlcNAc...) asparagine; by host glycosylation occurs at N397. Residues 485 to 504 traverse the membrane as a helical segment; the sequence is LLITFCFGWVLIPACTLAIL. Topologically, residues 505–626 are cytoplasmic; that stretch reads LVLKFFANIL…NLFRYKSRCY (122 aa). The interval 514-531 is binding to the ribonucleoprotein; sequence LHTSNQENRFKAILRKIK. 2 consecutive CCHC-type zinc fingers follow at residues 543–563 and 568–589; these read CEICKYECETLKELKAHNLSC and CPYCFTHCEPTETAIQAHYKVC. Binding to the ribonucleoprotein regions lie at residues 586-603, 590-601, and 609-623; these read YKVCQATHRFREDLKKTV, QATHRFREDLKK, and GPGCYRTLNLFRYKS. Residues 609–632 form the ITAM domain; the sequence is GPGCYRTLNLFRYKSRCYILTMWT. Positions 613 to 616 match the YxxL motif; it reads YRTL. The chain crosses the membrane as a helical span at residues 627 to 647; that stretch reads ILTMWTLLLIIESILWAASAA. The Lumenal segment spans residues 648–1104; sequence EIPLVPLWTD…WVMGIINGNW (457 aa). Intrachain disulfides connect C733–C768, C737–C775, C749–C883, C763–C894, C778–C902, C804–C813, C821–C830, and C861–C865. The tract at residues 755 to 775 is fusion loop; the sequence is YEYENSWACNPPDCPGVGTGC. A glycan (N-linked (GlcNAc...) asparagine; by host) is linked at N926. 5 cysteine pairs are disulfide-bonded: C968-C998, C991-C1043, C1008-C1013, C1044-C1049, and C1083-C1087. A helical transmembrane segment spans residues 1105–1125; sequence VVLIVLCVLLLFSLILLSILC. The binding to the ribonucleoprotein stretch occupies residues 1120–1133; sequence LLSILCPVRKHKKS. The Cytoplasmic segment spans residues 1126-1133; sequence PVRKHKKS.

This sequence belongs to the hantavirus envelope glycoprotein family. Homodimer. Homotetramer; forms heterotetrameric Gn-Gc spikes in the pre-fusion conformation. Interacts (via C-terminus) with the nucleoprotein. Interacts with host TUFM; this interaction contributes to the virus-induced degradation of mitochondria by autophagy, which leads to degradation of host MAVS and inhibition of type I interferon (IFN) responses. Interacts with host MAP1LC3B; this interaction contributes to the virus-induced degradation of mitochondria by autophagy, which leads to degradation of host MAVS and inhibition of type I interferon (IFN) responses. As to quaternary structure, homodimer. Homotetramer; forms heterotetrameric Gn-Gc spikes in the pre-fusion conformation. Homotrimer; forms homotrimer in the post-fusion conformation at acidic pH. Interacts (via C-terminus) with the nucleoprotein. Post-translationally, envelope polyprotein precursor is quickly cleaved in vivo just after synthesis, presumably by host signal peptidase.

Its subcellular location is the virion membrane. It is found in the host cell surface. It localises to the host Golgi apparatus membrane. The protein localises to the host endoplasmic reticulum membrane. The protein resides in the host mitochondrion. In terms of biological role, forms homotetramers with glycoprotein C at the surface of the virion. Attaches the virion to host cell receptors including integrin ITGAV/ITGB3. This attachment induces virion internalization predominantly through clathrin-dependent endocytosis. Mediates the assembly and budding of infectious virus particles through its interaction with the nucleocapsid protein and the viral genome. May dysregulate normal immune and endothelial cell responses through an ITAM motif. Translocates to mitochondria, binds to host TUFM and recruits MAP1LC3B. These interactions induce mitochondrial autophagy and therefore destruction of host MAVS leading to inhibition of type I interferon (IFN) responses. Concomitant breakdown of glycoprotein N is apparently prevented by the nucleoprotein that may inhibit Gn-stimulated autophagosome-lysosome fusion. Interacts with the viral genomic RNA. Its function is as follows. Forms homotetramers with glycoprotein N at the surface of the virion. Attaches the virion to host cell receptors including integrin ITGAV/ITGB3. This attachment induces virion internalization predominantly through clathrin-dependent endocytosis. Class II fusion protein that promotes fusion of viral membrane with host endosomal membrane after endocytosis of the virion. In Homo sapiens (Human), this protein is Envelopment polyprotein (GP).